We begin with the raw amino-acid sequence, 289 residues long: 4-diphosphocytidyl-2-C-methyl-D-erythritol kinase (289 aa).

Residue Lys16 is part of the active site. Position 99–109 (99–109 (PMGGGIGGGSS)) interacts with ATP. The active site involves Asp141.

It belongs to the GHMP kinase family. IspE subfamily.

It carries out the reaction 4-CDP-2-C-methyl-D-erythritol + ATP = 4-CDP-2-C-methyl-D-erythritol 2-phosphate + ADP + H(+). Its pathway is isoprenoid biosynthesis; isopentenyl diphosphate biosynthesis via DXP pathway; isopentenyl diphosphate from 1-deoxy-D-xylulose 5-phosphate: step 3/6. In terms of biological role, catalyzes the phosphorylation of the position 2 hydroxy group of 4-diphosphocytidyl-2C-methyl-D-erythritol. The sequence is that of 4-diphosphocytidyl-2-C-methyl-D-erythritol kinase from Ralstonia nicotianae (strain ATCC BAA-1114 / GMI1000) (Ralstonia solanacearum).